We begin with the raw amino-acid sequence, 344 residues long: Ferrochelatase (344 aa).

Fe cation contacts are provided by histidine 211 and glutamate 292.

The protein belongs to the ferrochelatase family.

It localises to the cytoplasm. It catalyses the reaction heme b + 2 H(+) = protoporphyrin IX + Fe(2+). It participates in porphyrin-containing compound metabolism; protoheme biosynthesis; protoheme from protoporphyrin-IX: step 1/1. Its function is as follows. Catalyzes the ferrous insertion into protoporphyrin IX. The chain is Ferrochelatase from Methylobacillus flagellatus (strain ATCC 51484 / DSM 6875 / VKM B-1610 / KT).